The following is a 386-amino-acid chain: Succinate--CoA ligase [ADP-forming] subunit beta (386 aa).

ATP is bound by residues K46, E99, A102, and E107. The Mg(2+) site is built by N199 and D213. Residues N264 and 321–323 contribute to the substrate site; that span reads GIM.

This sequence belongs to the succinate/malate CoA ligase beta subunit family. In terms of assembly, heterotetramer of two alpha and two beta subunits. Requires Mg(2+) as cofactor.

It carries out the reaction succinate + ATP + CoA = succinyl-CoA + ADP + phosphate. The catalysed reaction is GTP + succinate + CoA = succinyl-CoA + GDP + phosphate. Its pathway is carbohydrate metabolism; tricarboxylic acid cycle; succinate from succinyl-CoA (ligase route): step 1/1. Its function is as follows. Succinyl-CoA synthetase functions in the citric acid cycle (TCA), coupling the hydrolysis of succinyl-CoA to the synthesis of either ATP or GTP and thus represents the only step of substrate-level phosphorylation in the TCA. The beta subunit provides nucleotide specificity of the enzyme and binds the substrate succinate, while the binding sites for coenzyme A and phosphate are found in the alpha subunit. In Orientia tsutsugamushi (strain Boryong) (Rickettsia tsutsugamushi), this protein is Succinate--CoA ligase [ADP-forming] subunit beta.